The primary structure comprises 672 residues: Glycine--tRNA ligase beta subunit (672 aa).

The protein belongs to the class-II aminoacyl-tRNA synthetase family. In terms of assembly, tetramer of two alpha and two beta subunits.

The protein resides in the cytoplasm. The enzyme catalyses tRNA(Gly) + glycine + ATP = glycyl-tRNA(Gly) + AMP + diphosphate. In Thermotoga sp. (strain RQ2), this protein is Glycine--tRNA ligase beta subunit.